The sequence spans 352 residues: Hematopoietic SH2 domain-containing protein (352 aa).

The SH2 domain maps to 34–125; the sequence is WFHGAISRED…PRRELLTQPC (92 aa). Disordered regions lie at residues 157–199 and 241–352; these read EEAS…LGET and VISG…PGYC. Over residues 180 to 191 the composition is skewed to polar residues; sequence RITTKEATSSCP. The span at 283 to 295 shows a compositional bias: basic and acidic residues; that stretch reads PKDRKVPTRKAER. The span at 343–352 shows a compositional bias: pro residues; that stretch reads QPPPFAPGYC.

As to quaternary structure, interacts with FES and TNK2. May be phosphorylated by FES and ACK1. As to expression, predominantly expressed in spleen and hematopoietic cells such as peripheral blood leukocytes and weakly expressed in prostate, thymus, heart, small intestine and placenta.

Its subcellular location is the cytoplasm. The protein resides in the nucleus. Its function is as follows. May be a modulator of the apoptotic response through its ability to affect mitochondrial stability. Adapter protein involved in tyrosine kinase and CD28 signaling. Seems to affect CD28-mediated activation of the RE/AP element of the interleukin-2 promoter. The chain is Hematopoietic SH2 domain-containing protein (HSH2D) from Homo sapiens (Human).